The primary structure comprises 576 residues: 5'-nucleotidase (576 aa).

The first 28 residues, 1–28, serve as a signal peptide directing secretion; the sequence is MRPAAAKVPKWLLLALSALLPQWPAASA. 2 residues coordinate Zn(2+): Asp-38 and His-40. Residues Cys-53 and Cys-59 are joined by a disulfide bond. N-linked (GlcNAc...) asparagine glycosylation occurs at Asn-55. Positions 87, 119, 222, and 245 each coordinate Zn(2+). Asn-313 and Asn-335 each carry an N-linked (GlcNAc...) asparagine glycan. 2 disulfide bridges follow: Cys-355–Cys-360 and Cys-367–Cys-389. Arg-356 serves as a coordination point for AMP. Residue Arg-356 participates in IMP binding. AMP contacts are provided by Asn-392 and Arg-397. IMP is bound by residues Asn-392 and Arg-397. N-linked (GlcNAc...) asparagine glycosylation is present at Asn-405. Phe-419 lines the AMP pocket. An IMP-binding site is contributed by Phe-419. Residues Cys-478 and Cys-481 are joined by a disulfide bond. AMP is bound by residues Tyr-502 and Asp-508. The IMP site is built by Tyr-502 and Asp-508. The GPI-anchor amidated serine moiety is linked to residue Ser-551. Positions 552–576 are cleaved as a propeptide — removed in mature form; the sequence is AASHYQGSFPLVILSFWAMILILYQ.

The protein belongs to the 5'-nucleotidase family. Homodimer. Zn(2+) is required as a cofactor. In terms of tissue distribution, expressed at high levels in the placenta, kidney, lung and stomach and at lower levels in the thymus, spleen, skeletal muscle and esophagus.

It is found in the cell membrane. It carries out the reaction a ribonucleoside 5'-phosphate + H2O = a ribonucleoside + phosphate. It catalyses the reaction a 2'-deoxyribonucleoside 5'-phosphate + H2O = a 2'-deoxyribonucleoside + phosphate. The enzyme catalyses dTMP + H2O = thymidine + phosphate. The catalysed reaction is CMP + H2O = cytidine + phosphate. It carries out the reaction IMP + H2O = inosine + phosphate. It catalyses the reaction AMP + H2O = adenosine + phosphate. The enzyme catalyses GMP + H2O = guanosine + phosphate. The catalysed reaction is UMP + H2O = uridine + phosphate. It carries out the reaction dAMP + H2O = 2'-deoxyadenosine + phosphate. It catalyses the reaction dCMP + H2O = 2'-deoxycytidine + phosphate. Functionally, catalyzes the hydrolysis of nucleotide monophosphates, releasing inorganic phosphate and the corresponding nucleoside. Hydrolyzes IMP. Shows a preference for ribonucleotide monophosphates over their equivalent deoxyribose forms. Although AMP is the preferred substrate can also hydrolyze UMP, GMP, CMP, dAMP, dCMP, dTMP, NAD and NMN. In Mus musculus (Mouse), this protein is 5'-nucleotidase (Nt5e).